The chain runs to 849 residues: G-type lectin S-receptor-like serine/threonine-protein kinase B120 (849 aa).

An N-terminal signal peptide occupies residues 1 to 25 (MRFFRKTSLYLSLFLYFFLYESSMA). Residues 26–153 (ANTIRRGESL…DTDRPIWESF (128 aa)) form the Bulb-type lectin domain. Residues 26–438 (ANTIRRGESL…SEVGENRKTK (413 aa)) lie on the Extracellular side of the membrane. 6 N-linked (GlcNAc...) asparagine glycosylation sites follow: Asn110, Asn191, Asn210, Asn230, Asn273, and Asn282. An EGF-like; atypical domain is found at 295–332 (PDSECDQYNRCGKFGICDMKGSNGICSCIHGYEQVSVG). 2 disulfide bridges follow: Cys299–Cys311 and Cys305–Cys320. 3 N-linked (GlcNAc...) asparagine glycosylation sites follow: Asn333, Asn349, and Asn388. The region spanning 346 to 427 (CERNISVGED…GGSSLHIRLA (82 aa)) is the PAN domain. 2 cysteine pairs are disulfide-bonded: Cys381/Cys402 and Cys385/Cys391. Residues 439–459 (IAVIVAVLVGVILIGIFALLL) form a helical membrane-spanning segment. Residues 460–849 (WRFKRKKDVS…EITSTVVLGR (390 aa)) are Cytoplasmic-facing. The Protein kinase domain maps to 529–814 (FCKENELGRG…TLAAPRQPTF (286 aa)). Residues 535 to 543 (LGRGGFGPV) and Lys557 each bind ATP. Ser563 is modified (phosphoserine). The tract at residues 618–635 (TKQALIDWKLRFSIIEGI) is caM-binding. The active-site Proton acceptor is Asp654. 2 positions are modified to phosphoserine: Ser658 and Ser671. Thr688 carries the phosphothreonine modification. Residues Ser732 and Ser837 each carry the phosphoserine modification. At Thr844 the chain carries Phosphothreonine.

The protein belongs to the protein kinase superfamily. Ser/Thr protein kinase family.

The protein resides in the cell membrane. It catalyses the reaction L-seryl-[protein] + ATP = O-phospho-L-seryl-[protein] + ADP + H(+). The enzyme catalyses L-threonyl-[protein] + ATP = O-phospho-L-threonyl-[protein] + ADP + H(+). The protein is G-type lectin S-receptor-like serine/threonine-protein kinase B120 (B120) of Arabidopsis thaliana (Mouse-ear cress).